The following is a 269-amino-acid chain: NAD kinase (269 aa).

Aspartate 45 serves as the catalytic Proton acceptor. NAD(+) contacts are provided by residues 45–46, 122–123, arginine 149, aspartate 151, and alanine 186; these read DG and NE.

This sequence belongs to the NAD kinase family. The cofactor is a divalent metal cation.

The protein resides in the cytoplasm. It carries out the reaction NAD(+) + ATP = ADP + NADP(+) + H(+). Involved in the regulation of the intracellular balance of NAD and NADP, and is a key enzyme in the biosynthesis of NADP. Catalyzes specifically the phosphorylation on 2'-hydroxyl of the adenosine moiety of NAD to yield NADP. This chain is NAD kinase, found in Staphylococcus saprophyticus subsp. saprophyticus (strain ATCC 15305 / DSM 20229 / NCIMB 8711 / NCTC 7292 / S-41).